The following is a 684-amino-acid chain: U4/U6 small nuclear ribonucleoprotein Prp3 (684 aa).

One can recognise a PWI domain in the interval 1–87; it reads MSLSKRELDE…HSKSNSDRNR (87 aa). The segment covering 73-107 has biased composition (basic and acidic residues); it reads GRSSRHSKSNSDRNRKRELKDVFGDDSEVSKESSG. Disordered regions lie at residues 73–109 and 162–183; these read GRSS…SGVK and FISP…RLPI. Residues 170–183 are compositionally biased toward polar residues; that stretch reads PKISSSSQSERLPI.

In terms of assembly, component of the precatalytic spliceosome (spliceosome B complex). Component of the U4/U6-U5 tri-snRNP complex, a building block of the precatalytic spliceosome (spliceosome B complex). The U4/U6-U5 tri-snRNP complex is composed of the U4, U6 and U5 snRNAs and at least PRPF3, PRPF4, PRPF6, PRPF8, PRPF31, SNRNP200, TXNL4A, SNRNP40, SNRPB, SNRPD1, SNRPD2, SNRPD3, SNRPE, SNRPF, SNRPG, DDX23, CD2BP2, PPIH, SNU13, EFTUD2, SART1 and USP39, plus LSM2, LSM3, LSM4, LSM5, LSM6, LSM7 and LSM8.

Its subcellular location is the nucleus. It localises to the nucleus speckle. Functionally, plays a role in pre-mRNA splicing as component of the U4/U6-U5 tri-snRNP complex that is involved in spliceosome assembly, and as component of the precatalytic spliceosome (spliceosome B complex). This Gallus gallus (Chicken) protein is U4/U6 small nuclear ribonucleoprotein Prp3 (PRPF3).